Reading from the N-terminus, the 332-residue chain is Biotin synthase (332 aa).

The 230-residue stretch at 46–275 (YYGKKVKLNM…SKEIRISGGR (230 aa)) folds into the Radical SAM core domain. Residues Cys-64, Cys-68, and Cys-71 each coordinate [4Fe-4S] cluster. The [2Fe-2S] cluster site is built by Cys-108, Cys-140, Cys-200, and Arg-270.

Belongs to the radical SAM superfamily. Biotin synthase family. In terms of assembly, homodimer. Requires [4Fe-4S] cluster as cofactor. It depends on [2Fe-2S] cluster as a cofactor.

It carries out the reaction (4R,5S)-dethiobiotin + (sulfur carrier)-SH + 2 reduced [2Fe-2S]-[ferredoxin] + 2 S-adenosyl-L-methionine = (sulfur carrier)-H + biotin + 2 5'-deoxyadenosine + 2 L-methionine + 2 oxidized [2Fe-2S]-[ferredoxin]. The protein operates within cofactor biosynthesis; biotin biosynthesis; biotin from 7,8-diaminononanoate: step 2/2. Functionally, catalyzes the conversion of dethiobiotin (DTB) to biotin by the insertion of a sulfur atom into dethiobiotin via a radical-based mechanism. The polypeptide is Biotin synthase (Lysinibacillus sphaericus (Bacillus sphaericus)).